The primary structure comprises 471 residues: Glutamate--tRNA ligase (471 aa).

The 'HIGH' region signature appears at 9–19; sequence PSPTGYLHVGG. Zn(2+) contacts are provided by Cys98, Cys100, Cys125, and His127. Residues 237-241 carry the 'KMSKS' region motif; it reads KLSKR. Position 240 (Lys240) interacts with ATP.

Belongs to the class-I aminoacyl-tRNA synthetase family. Glutamate--tRNA ligase type 1 subfamily. As to quaternary structure, monomer. Requires Zn(2+) as cofactor.

It is found in the cytoplasm. The enzyme catalyses tRNA(Glu) + L-glutamate + ATP = L-glutamyl-tRNA(Glu) + AMP + diphosphate. Functionally, catalyzes the attachment of glutamate to tRNA(Glu) in a two-step reaction: glutamate is first activated by ATP to form Glu-AMP and then transferred to the acceptor end of tRNA(Glu). In Shigella boydii serotype 18 (strain CDC 3083-94 / BS512), this protein is Glutamate--tRNA ligase.